The following is a 477-amino-acid chain: Aspartyl/glutamyl-tRNA(Asn/Gln) amidotransferase subunit B (477 aa).

It belongs to the GatB/GatE family. GatB subfamily. In terms of assembly, heterotrimer of A, B and C subunits.

It carries out the reaction L-glutamyl-tRNA(Gln) + L-glutamine + ATP + H2O = L-glutaminyl-tRNA(Gln) + L-glutamate + ADP + phosphate + H(+). The catalysed reaction is L-aspartyl-tRNA(Asn) + L-glutamine + ATP + H2O = L-asparaginyl-tRNA(Asn) + L-glutamate + ADP + phosphate + 2 H(+). In terms of biological role, allows the formation of correctly charged Asn-tRNA(Asn) or Gln-tRNA(Gln) through the transamidation of misacylated Asp-tRNA(Asn) or Glu-tRNA(Gln) in organisms which lack either or both of asparaginyl-tRNA or glutaminyl-tRNA synthetases. The reaction takes place in the presence of glutamine and ATP through an activated phospho-Asp-tRNA(Asn) or phospho-Glu-tRNA(Gln). The polypeptide is Aspartyl/glutamyl-tRNA(Asn/Gln) amidotransferase subunit B (Lawsonia intracellularis (strain PHE/MN1-00)).